The primary structure comprises 292 residues: Phosphatidylserine decarboxylase proenzyme (292 aa).

Active-site charge relay system; for autoendoproteolytic cleavage activity residues include D89, H146, and S252. Catalysis depends on S252, which acts as the Schiff-base intermediate with substrate; via pyruvic acid; for decarboxylase activity. Position 252 is a pyruvic acid (Ser); by autocatalysis (S252).

This sequence belongs to the phosphatidylserine decarboxylase family. PSD-B subfamily. Prokaryotic type I sub-subfamily. In terms of assembly, heterodimer of a large membrane-associated beta subunit and a small pyruvoyl-containing alpha subunit. The cofactor is pyruvate. Post-translationally, is synthesized initially as an inactive proenzyme. Formation of the active enzyme involves a self-maturation process in which the active site pyruvoyl group is generated from an internal serine residue via an autocatalytic post-translational modification. Two non-identical subunits are generated from the proenzyme in this reaction, and the pyruvate is formed at the N-terminus of the alpha chain, which is derived from the carboxyl end of the proenzyme. The autoendoproteolytic cleavage occurs by a canonical serine protease mechanism, in which the side chain hydroxyl group of the serine supplies its oxygen atom to form the C-terminus of the beta chain, while the remainder of the serine residue undergoes an oxidative deamination to produce ammonia and the pyruvoyl prosthetic group on the alpha chain. During this reaction, the Ser that is part of the protease active site of the proenzyme becomes the pyruvoyl prosthetic group, which constitutes an essential element of the active site of the mature decarboxylase.

Its subcellular location is the cell membrane. The catalysed reaction is a 1,2-diacyl-sn-glycero-3-phospho-L-serine + H(+) = a 1,2-diacyl-sn-glycero-3-phosphoethanolamine + CO2. It participates in phospholipid metabolism; phosphatidylethanolamine biosynthesis; phosphatidylethanolamine from CDP-diacylglycerol: step 2/2. Functionally, catalyzes the formation of phosphatidylethanolamine (PtdEtn) from phosphatidylserine (PtdSer). The sequence is that of Phosphatidylserine decarboxylase proenzyme from Shewanella baltica (strain OS223).